We begin with the raw amino-acid sequence, 207 residues long: Protein phosphatase inhibitor 2 (207 aa).

Disordered regions lie at residues 1-44 (MAAS…SKKS), 65-97 (LMKI…ALTP), and 110-146 (ESLE…EMKR). An N-acetylalanine modification is found at A2. The tract at residues 12 to 17 (KGILKN) is required for binding PPP1CC. Positions 19–28 (SSTTSSVVST) are enriched in low complexity. Residues 35 to 44 (SVDEELSKKS) show a composition bias toward basic and acidic residues. A required for binding PPP1CC region spans residues 43–55 (KSQKWDEMSILAT). A Phosphoserine; by ATM modification is found at S44. T73 bears the Phosphothreonine; by GSK3 mark. The segment covering 80–91 (ADDEDALSDSET) has biased composition (acidic residues). Phosphoserine is present on residues S87 and S89. Phosphothreonine is present on residues T92 and T96. Residues 112–122 (LEPKYRVREQE) show a composition bias toward basic and acidic residues. Phosphoserine is present on residues S123, S124, S129, and S132. Residues 123–132 (SSGDEDSDLS) show a composition bias toward acidic residues. Residues 133–145 (PEEREKKRQFEMK) show a composition bias toward basic and acidic residues. Residues 149 to 152 (HYNE) form a required for binding PPP1CC catalytic center, displacing metal ions and inhibition of PPP1CC catalytic activity region. Residues 165 to 207 (KDLNDEEEDEEMSETAAGESMNMEESSQGSATSDQLQNKSQSS) are disordered. A compositionally biased stretch (acidic residues) spans 168 to 177 (NDEEEDEEMS). Positions 187–207 (MEESSQGSATSDQLQNKSQSS) are enriched in polar residues.

The protein belongs to the protein phosphatase inhibitor 2 family. Heterodimer with PP1. Phosphorylation on Ser-44 by ATM activates PP1 by dissociating the PP1-PPP1R2 complex. Phosphorylation on Thr-73 by GSK3 activates PP1 by dissociating the PP1-PPP1R2 complex.

Inhibitor of protein-phosphatase 1. This is Protein phosphatase inhibitor 2 (PPP1R2) from Bos taurus (Bovine).